A 322-amino-acid chain; its full sequence is Gas vesicle protein L (322 aa).

The tract at residues 1-85 (MTEQSSGSAT…SEQATVDWST (85 aa)) is disordered. Residues 17 to 36 (ETAKQETGRKNEQPEERTVT) show a composition bias toward basic and acidic residues. The span at 45–57 (INTTTAESETGSE) shows a compositional bias: polar residues. The span at 58 to 72 (QESKAGSEQESKAGS) shows a compositional bias: basic and acidic residues. Residues 73–85 (EQESEQATVDWST) show a composition bias toward polar residues.

This sequence belongs to the gas vesicle GvpF/GvpL family. As to quaternary structure, gvpF to GvpM interact with each other in vitro, and may form multi-subunit complex(es). Interacts with GvpC, GvpN and GvpO.

It localises to the gas vesicle. Proteins GvpF to GvpM might be involved in nucleating gas vesicle formation. A minor component of the gas vesicle. Gas vesicles are small, hollow, gas filled protein structures that are found in several microbial planktonic microorganisms. They allow positioning of halobacteria at the optimal depth for growth in the poorly aerated, shallow brine pools of their habitat. Functionally, expression of a 9.5 kb mc-vac DNA fragment containing 2 divergently transcribed regions (gvpD-gvpE-gvpF-gvpG-gvpH-gvpI-gvpJ-gvpK-gvpL-gvpM and gvpA-gvpC-gvpN-gvpO) allows H.volcanii to produce gas vesicles. In Haloferax mediterranei (strain ATCC 33500 / DSM 1411 / JCM 8866 / NBRC 14739 / NCIMB 2177 / R-4) (Halobacterium mediterranei), this protein is Gas vesicle protein L.